The following is a 342-amino-acid chain: Cell division protein ZipA (342 aa).

Over 1–6 (MEDLQL) the chain is Periplasmic. A helical transmembrane segment spans residues 7-27 (VLFILGAIAIVAVLVHGFWSI). Residues 28–342 (RRQQPKSLKD…DYLHRIRANA (315 aa)) are Cytoplasmic-facing. Residues 33–57 (KSLKDSPMGNFYKQQADKESPPKRV) are disordered. Positions 47 to 57 (QADKESPPKRV) are enriched in basic and acidic residues.

Belongs to the ZipA family. In terms of assembly, interacts with FtsZ via their C-terminal domains.

It is found in the cell inner membrane. In terms of biological role, essential cell division protein that stabilizes the FtsZ protofilaments by cross-linking them and that serves as a cytoplasmic membrane anchor for the Z ring. Also required for the recruitment to the septal ring of downstream cell division proteins. This is Cell division protein ZipA from Shewanella putrefaciens (strain CN-32 / ATCC BAA-453).